We begin with the raw amino-acid sequence, 374 residues long: Deoxyguanosinetriphosphate triphosphohydrolase-like protein (374 aa).

Residues 65–196 (RLTHSLEVAQ…ANLADEIAYN (132 aa)) form the HD domain.

Belongs to the dGTPase family. Type 2 subfamily.

This is Deoxyguanosinetriphosphate triphosphohydrolase-like protein (dgt) from Nitrosomonas europaea (strain ATCC 19718 / CIP 103999 / KCTC 2705 / NBRC 14298).